A 533-amino-acid polypeptide reads, in one-letter code: Protein mono-ADP-ribosyltransferase PARP3 (533 aa).

Residues Met-1–Arg-30 are disordered. An N6-(ADP-ribosyl)lysine modification is found at Lys-6. 4 positions are modified to ADP-ribosyl glutamic acid: Glu-12, Glu-15, Glu-26, and Glu-34. The short motif at Pro-14–Arg-20 is the Nuclear localization signal element. Lys-37 is subject to N6-(ADP-ribosyl)lysine. The WGR domain maps to Gly-59–Tyr-150. An ADP-ribosyl aspartic acid modification is found at Asp-141. An ADP-ribosyl glutamic acid modification is found at Glu-163. One can recognise a PARP alpha-helical domain in the interval Pro-182–Ala-300. Asp-210 is subject to ADP-ribosyl aspartic acid. Glu-231, Glu-309, Glu-310, Glu-344, and Glu-449 each carry ADP-ribosyl glutamic acid. One can recognise a PARP catalytic domain in the interval His-313–Leu-533. A disordered region spans residues Thr-454–Asp-482.

It belongs to the ARTD/PARP family. As to quaternary structure, interacts with PARP1; leading to activate PARP1 in absence of DNA. Interacts with PRKDC. Interacts with XRCC5/Ku80; the interaction is dependent on nucleic acids. Interacts with XRCC6/Ku70; the interaction is dependent on nucleic acids. Interacts with EZH2, HDAC1, HDAC2, SUZ12, YY1, LRIG3 and LIG4. Post-translationally, auto-mono-ADP-ribosylated. Widely expressed; the highest levels are in the kidney, skeletal muscle, liver, heart and spleen; also detected in pancreas, lung, placenta, brain, leukocytes, colon, small intestine, ovary, testis, prostate and thymus.

The protein localises to the nucleus. The protein resides in the chromosome. Its subcellular location is the cytoplasm. It is found in the cytoskeleton. It localises to the microtubule organizing center. The protein localises to the centrosome. The protein resides in the centriole. The catalysed reaction is L-aspartyl-[protein] + NAD(+) = 4-O-(ADP-D-ribosyl)-L-aspartyl-[protein] + nicotinamide. It carries out the reaction L-glutamyl-[protein] + NAD(+) = 5-O-(ADP-D-ribosyl)-L-glutamyl-[protein] + nicotinamide. It catalyses the reaction L-lysyl-[protein] + NAD(+) = N(6)-(ADP-D-ribosyl)-L-lysyl-[protein] + nicotinamide + H(+). Its activity is regulated as follows. Mono-ADP-ribosyltransferase activity of PARP3 is selectively inhibited by ME0328 compound; ME0328 does not inhibit other ARTD/PARP enzymes, such as PARP1. Mono-ADP-ribosyltransferase is strongly inhibited by KU0058948 compound. Functionally, mono-ADP-ribosyltransferase that mediates mono-ADP-ribosylation of target proteins and plays a key role in the response to DNA damage. Mediates mono-ADP-ribosylation of glutamate, aspartate or lysine residues on target proteins. In contrast to PARP1 and PARP2, it is not able to mediate poly-ADP-ribosylation. Involved in DNA repair by mediating mono-ADP-ribosylation of a limited number of acceptor proteins involved in chromatin architecture and in DNA metabolism, such as histone H2B, XRCC5 and XRCC6. ADP-ribosylation follows DNA damage and appears as an obligatory step in a detection/signaling pathway leading to the reparation of DNA strand breaks. Involved in single-strand break repair by catalyzing mono-ADP-ribosylation of histone H2B on 'Glu-2' (H2BE2ADPr) of nucleosomes containing nicked DNA. Cooperates with the XRCC5-XRCC6 (Ku80-Ku70) heterodimer to limit end-resection thereby promoting accurate NHEJ. Suppresses G-quadruplex (G4) structures in response to DNA damage. Associates with a number of DNA repair factors and is involved in the response to exogenous and endogenous DNA strand breaks. Together with APLF, promotes the retention of the LIG4-XRCC4 complex on chromatin and accelerate DNA ligation during non-homologous end-joining (NHEJ). May link the DNA damage surveillance network to the mitotic fidelity checkpoint. Acts as a negative regulator of immunoglobulin class switch recombination, probably by controlling the level of AICDA /AID on the chromatin. In addition to proteins, also able to ADP-ribosylate DNA: mediates DNA mono-ADP-ribosylation of DNA strand break termini via covalent addition of a single ADP-ribose moiety to a 5'- or 3'-terminal phosphate residues in DNA containing multiple strand breaks. The chain is Protein mono-ADP-ribosyltransferase PARP3 from Homo sapiens (Human).